A 308-amino-acid chain; its full sequence is Homeobox protein HMX3 (308 aa).

Disordered stretches follow at residues 1–57 (MPET…GFAL) and 107–184 (AEKS…KKKT). The span at 9–19 (PSAPPPPPPPK) shows a compositional bias: pro residues. Composition is skewed to basic and acidic residues over residues 135–144 (AEQKERDPKS) and 156–177 (EEGK…PEKK). The homeobox DNA-binding region spans 181-240 (KKKTRTVFSRSQVFQLESTFDMKRYLSSSERAGLAASLHLTETQVKIWFQNRRNKWKRQL).

It belongs to the HMX homeobox family.

The protein resides in the nucleus. Its function is as follows. Transcription factor involved in specification of neuronal cell types and which is required for inner ear and hypothalamus development. Binds to the 5'-CAAGTG-3' core sequence. This is Homeobox protein HMX3 (HMX3) from Gallus gallus (Chicken).